The chain runs to 336 residues: Large ribosomal subunit protein uL3 (336 aa).

Disordered regions lie at residues 1–43, 205–230, and 311–336; these read MPQP…QGFA, ITKG…HARQ, and RPAV…SNQG. Residues 219–230 show a composition bias toward basic residues; it reads GVQKRKGKHARQ.

The protein belongs to the universal ribosomal protein uL3 family. In terms of assembly, part of the 50S ribosomal subunit. Forms a cluster with proteins L14 and L24e.

Its function is as follows. One of the primary rRNA binding proteins, it binds directly near the 3'-end of the 23S rRNA, where it nucleates assembly of the 50S subunit. The sequence is that of Large ribosomal subunit protein uL3 from Natronomonas pharaonis (strain ATCC 35678 / DSM 2160 / CIP 103997 / JCM 8858 / NBRC 14720 / NCIMB 2260 / Gabara) (Halobacterium pharaonis).